Here is a 465-residue protein sequence, read N- to C-terminus: MFIDGKWIIRDDIDVFDPYTLKNIEKITALDREETKNAIEITEKNKEVMKNLSPSKRYSILMKIAEQISLKKDLFAKTISIDVGKPIKQSKIEVDRTLTAFRLSAFYAKELRGETINSENGLIFTKKEPLGVVGAITPFNFPLNLITHKIGPAIATGNSVILHPSSKAPIAAIYLTKIIEHVLKQMDIPRGVFNLATGNGDIVGDEISKNDKINMVSFTGSVEIGESISKNAKMKKVTLELGGNNPMIVLKDSDIKLAAKSAVKSKFLNAGQVCISVGQVLVEEEVLETFTKYIIDETKNLVLGNPLDTKTDIGPLISPESALRIENLIKESVNEGGELLIGGNRQNSLIFPAVINIDEDNLLSKIETFGPVLPILKVKNSEEAVSIANNSKYGLQAGVFTNDINKAMKIADSLEYGGIMINSSPTFRKDNMPFGGVKKSGLGREGIKYTVEEMCETKTVVIHNI.

220–225 (GSVEIG) is a binding site for NAD(+). Catalysis depends on residues E240 and C274.

The protein belongs to the aldehyde dehydrogenase family. As to quaternary structure, homotetramer.

It catalyses the reaction (S)-lactaldehyde + NAD(+) + H2O = (S)-lactate + NADH + 2 H(+). The protein operates within cofactor biosynthesis; coenzyme F420 biosynthesis. In terms of biological role, involved in F420 biosynthesis through the oxidation of lactaldehyde to lactate. The protein is Lactaldehyde dehydrogenase of Methanococcus maripaludis (strain C7 / ATCC BAA-1331).